Consider the following 234-residue polypeptide: 2-amino-5-formylamino-6-ribosylaminopyrimidin-4(3H)-one 5'-monophosphate deformylase (234 aa).

4 residues coordinate Fe cation: Glu30, His32, Asp41, and His111.

The protein belongs to the creatininase superfamily. FAPy deformylase family. In terms of assembly, homodimer. Fe(2+) is required as a cofactor. The cofactor is Zn(2+).

The enzyme catalyses 2-amino-5-formylamino-6-(5-phospho-D-ribosylamino)pyrimidin-4(3H)-one + H2O = 2,5-diamino-6-(1-D-ribosylamino)pyrimidin-4(3H)-one 5'-phosphate + formate + H(+). It functions in the pathway cofactor biosynthesis; coenzyme F420 biosynthesis. It participates in cofactor biosynthesis; riboflavin biosynthesis. In terms of biological role, catalyzes the hydrolysis of the formamide of 2-amino-5-formylamino-6-ribosylamino-4(3H)-pyrimidinone 5'-monophosphate (FAPy) to form 2,5-diamino-6-ribosylamino-4(3H)-pyrimidinone 5'-phosphate (APy). In Methanothermobacter thermautotrophicus (strain ATCC 29096 / DSM 1053 / JCM 10044 / NBRC 100330 / Delta H) (Methanobacterium thermoautotrophicum), this protein is 2-amino-5-formylamino-6-ribosylaminopyrimidin-4(3H)-one 5'-monophosphate deformylase.